The chain runs to 598 residues: Probable translation initiation factor IF-2 (598 aa).

Residues 3–225 (LRCPIVSVLG…GLAQRFLEQK (223 aa)) form the tr-type G domain. Residues 12–19 (GHVDHGKT) form a G1 region. Residue 12 to 19 (GHVDHGKT) coordinates GTP. The interval 37-41 (GITQH) is G2. The segment at 76-79 (DTPG) is G3. GTP is bound by residues 76–80 (DTPGH) and 130–133 (NKVD). Residues 130–133 (NKVD) form a G4 region. A G5 region spans residues 200-202 (SAM).

It belongs to the TRAFAC class translation factor GTPase superfamily. Classic translation factor GTPase family. IF-2 subfamily.

In terms of biological role, function in general translation initiation by promoting the binding of the formylmethionine-tRNA to ribosomes. Seems to function along with eIF-2. The chain is Probable translation initiation factor IF-2 from Methanococcus maripaludis (strain DSM 14266 / JCM 13030 / NBRC 101832 / S2 / LL).